A 168-amino-acid polypeptide reads, in one-letter code: uncharacterized protein (168 aa).

This is an uncharacterized protein from Escherichia coli (strain K12).